We begin with the raw amino-acid sequence, 342 residues long: Pyrophosphate--fructose 6-phosphate 1-phosphotransferase (342 aa).

A diphosphate-binding site is contributed by glycine 10. Glutamate 103 serves as a coordination point for Mg(2+). Substrate is bound by residues threonine 126–aspartate 128, arginine 163, methionine 170–arginine 172, glutamate 222, arginine 266, and histidine 272–arginine 275. Aspartate 128 (proton acceptor) is an active-site residue.

The protein belongs to the phosphofructokinase type A (PFKA) family. Mixed-substrate PFK group III subfamily. In terms of assembly, homodimer or homotetramer. Mg(2+) is required as a cofactor.

Its subcellular location is the cytoplasm. It carries out the reaction beta-D-fructose 6-phosphate + diphosphate = beta-D-fructose 1,6-bisphosphate + phosphate + H(+). Its pathway is carbohydrate degradation; glycolysis; D-glyceraldehyde 3-phosphate and glycerone phosphate from D-glucose: step 3/4. With respect to regulation, non-allosteric. Its function is as follows. Catalyzes the phosphorylation of D-fructose 6-phosphate, the first committing step of glycolysis. Uses inorganic phosphate (PPi) as phosphoryl donor instead of ATP like common ATP-dependent phosphofructokinases (ATP-PFKs), which renders the reaction reversible, and can thus function both in glycolysis and gluconeogenesis. Consistently, PPi-PFK can replace the enzymes of both the forward (ATP-PFK) and reverse (fructose-bisphosphatase (FBPase)) reactions. The sequence is that of Pyrophosphate--fructose 6-phosphate 1-phosphotransferase from Streptomyces coelicolor (strain ATCC BAA-471 / A3(2) / M145).